A 289-amino-acid chain; its full sequence is 2-dehydro-3-deoxyphosphooctonate aldolase (289 aa).

This sequence belongs to the KdsA family.

The protein localises to the cytoplasm. It carries out the reaction D-arabinose 5-phosphate + phosphoenolpyruvate + H2O = 3-deoxy-alpha-D-manno-2-octulosonate-8-phosphate + phosphate. The protein operates within carbohydrate biosynthesis; 3-deoxy-D-manno-octulosonate biosynthesis; 3-deoxy-D-manno-octulosonate from D-ribulose 5-phosphate: step 2/3. Its pathway is bacterial outer membrane biogenesis; lipopolysaccharide biosynthesis. The protein is 2-dehydro-3-deoxyphosphooctonate aldolase of Cupriavidus taiwanensis (strain DSM 17343 / BCRC 17206 / CCUG 44338 / CIP 107171 / LMG 19424 / R1) (Ralstonia taiwanensis (strain LMG 19424)).